We begin with the raw amino-acid sequence, 214 residues long: Non-structural protein NP-1 (214 aa).

Disordered regions lie at residues 1 to 85 (MSSE…TRTN) and 192 to 214 (ESEE…NASN). Over residues 33 to 43 (SRSRSPIRRHG) the composition is skewed to basic residues. A compositionally biased stretch (basic and acidic residues) spans 44 to 55 (EKNLEYAHHNNQ). A compositionally biased stretch (polar residues) spans 56–71 (DNRQSSYTASKTSDQA). Residues 192-201 (ESEEVTDEEM) are compositionally biased toward acidic residues.

This sequence belongs to the Bocaparvovirus Non-structural protein NP-1 family.

The protein localises to the host nucleus. Required for the expression of the capsid proteins. Performs the splicing and internal polyadenylation of the viral capsid-encoding mRNA precursor, which allows its maturation and expression. Transactivates the viral promoter. The protein is Non-structural protein NP-1 (NP1) of Human bocavirus 4 (HBoV4).